The primary structure comprises 199 residues: Early activation antigen CD69 (199 aa).

A disordered region spans residues 1 to 29; it reads MSSENCFVAENSSLHPESGQENDATSPHF. Over 1 to 40 the chain is Cytoplasmic; sequence MSSENCFVAENSSLHPESGQENDATSPHFSTRHEGSFQVP. The helical; Signal-anchor for type II membrane protein transmembrane segment at 41 to 61 threads the bilayer; that stretch reads VLCAVMNVVFITILIIALIAL. Topologically, residues 62–199 are extracellular; the sequence is SVGQYNCPGQ…LYWICNKPYK (138 aa). Intrachain disulfides connect C85/C96, C113/C194, and C173/C186. The C-type lectin domain occupies 92 to 195; sequence YQRKCYFIST…CEKNLYWICN (104 aa). A glycan (N-linked (GlcNAc...) asparagine) is linked at N166.

Homodimer; disulfide-linked. Interacts with S100A8 and S100A9. Interacts with galactin-1/LGALS1. Interacts with S1PR1; this interaction mediates S1PR1 degradation. Constitutive Ser/Thr phosphorylation in both mature thymocytes and activated T-lymphocytes. In terms of tissue distribution, expressed on the surface of activated T-cells, B-cells, natural killer cells, neutrophils, eosinophils, epidermal Langerhans cells and platelets.

The protein resides in the cell membrane. Its function is as follows. Transmembrane protein expressed mainly on T-cells resident in mucosa that plays an essential role in immune cell homeostasis. Rapidly expressed on the surface of platelets, T-lymphocytes and NK cells upon activation by various stimuli, such as antigen recognition or cytokine signaling, stimulates different signaling pathways in different cell types. Negatively regulates Th17 cell differentiation through its carbohydrate dependent interaction with galectin-1/LGALS1 present on immature dendritic cells. Association of CD69 cytoplasmic tail with the JAK3/STAT5 signaling pathway regulates the transcription of RORgamma/RORC and, consequently, differentiation toward the Th17 lineage. Also acts via the S100A8/S100A9 complex present on peripheral blood mononuclear cells to promote the conversion of naive CD4 T-cells into regulatory T-cells. Acts as an oxidized low-density lipoprotein (oxLDL) receptor in CD4 T-lymphocytes and negatively regulates the inflammatory response by inducing the expression of PDCD1 through the activation of NFAT. Participates in adipose tissue-derived mesenchymal stem cells (ASCs)-mediated protection against P.aeruginosa infection. Mechanistically, specifically recognizes P.aeruginosa to promote ERK1 activation, followed by granulocyte-macrophage colony-stimulating factor (GM-CSF) and other inflammatory cytokines secretion. In eosinophils, induces IL-10 production through the ERK1/2 pathway. Negatively regulates the chemotactic responses of effector lymphocytes and dendritic cells (DCs) to sphingosine 1 phosphate/S1P by acting as a S1PR1 receptor agonist and facilitating the internalization and degradation of the receptor. This is Early activation antigen CD69 (CD69) from Homo sapiens (Human).